The chain runs to 456 residues: Histidinol dehydrogenase homolog (456 aa).

Residue histidine 279 participates in Zn(2+) binding. Catalysis depends on proton acceptor residues glutamate 347 and histidine 348. Histidine 440 is a Zn(2+) binding site.

It belongs to the histidinol dehydrogenase family. Zn(2+) is required as a cofactor.

The polypeptide is Histidinol dehydrogenase homolog (Rhizobium meliloti (strain 1021) (Ensifer meliloti)).